Consider the following 500-residue polypeptide: Aldehyde dehydrogenase, mitochondrial (500 aa).

Lys-35, Lys-56, Lys-61, and Lys-142 each carry N6-acetyllysine. 245 to 250 (GSTEVG) lines the NAD(+) pocket. The active-site Proton acceptor is Glu-268. Cys-302 acts as the Nucleophile in catalysis. N6-acetyllysine occurs at positions 351, 358, 366, 390, 409, 411, 424, and 434.

This sequence belongs to the aldehyde dehydrogenase family. As to quaternary structure, homotetramer. In terms of processing, in response to mitochondrial stress, the precursor protein is ubiquitinated by the SIFI complex in the cytoplasm before mitochondrial import, leading to its degradation. Within the SIFI complex, UBR4 initiates ubiquitin chain that are further elongated or branched by KCMF1.

It is found in the mitochondrion matrix. It catalyses the reaction an aldehyde + NAD(+) + H2O = a carboxylate + NADH + 2 H(+). The protein operates within alcohol metabolism; ethanol degradation; acetate from ethanol: step 2/2. Functionally, required for clearance of cellular formaldehyde, a cytotoxic and carcinogenic metabolite that induces DNA damage. The chain is Aldehyde dehydrogenase, mitochondrial (ALDH2) from Mesocricetus auratus (Golden hamster).